A 161-amino-acid polypeptide reads, in one-letter code: Cyclic pyranopterin monophosphate synthase (161 aa).

Substrate-binding positions include 75 to 77 and 113 to 114; these read LCH and ME. Residue Asp128 is part of the active site.

This sequence belongs to the MoaC family. As to quaternary structure, homohexamer; trimer of dimers.

It carries out the reaction (8S)-3',8-cyclo-7,8-dihydroguanosine 5'-triphosphate = cyclic pyranopterin phosphate + diphosphate. Its pathway is cofactor biosynthesis; molybdopterin biosynthesis. Its function is as follows. Catalyzes the conversion of (8S)-3',8-cyclo-7,8-dihydroguanosine 5'-triphosphate to cyclic pyranopterin monophosphate (cPMP). This is Cyclic pyranopterin monophosphate synthase from Escherichia coli O9:H4 (strain HS).